The sequence spans 210 residues: Protein LURP-one-related 5 (210 aa).

The protein belongs to the LOR family.

Might be related to the phospholipid scramblase and tubby-like superfamily of membrane tethered transcription factors. The protein is Protein LURP-one-related 5 of Arabidopsis thaliana (Mouse-ear cress).